The sequence spans 179 residues: uncharacterized protein (179 aa).

This is an uncharacterized protein from Bacillus subtilis (strain 168).